We begin with the raw amino-acid sequence, 270 residues long: Phospholysine phosphohistidine inorganic pyrophosphate phosphatase (270 aa).

Asp-17 and Ser-19 together coordinate Mg(2+). Substrate contacts are provided by residues 17–19, 54–55, and Lys-189; these read DIS and TN. Asp-214 contacts Mg(2+).

Belongs to the HAD-like hydrolase superfamily. In terms of assembly, homodimer. The cofactor is Mg(2+).

The protein localises to the cytoplasm. It localises to the nucleus. The catalysed reaction is diphosphate + H2O = 2 phosphate + H(+). Its function is as follows. Phosphatase that hydrolyzes imidodiphosphate, 3-phosphohistidine and 6-phospholysine. Has broad substrate specificity and can also hydrolyze inorganic diphosphate, but with lower efficiency. The chain is Phospholysine phosphohistidine inorganic pyrophosphate phosphatase (Lhpp) from Mus musculus (Mouse).